A 343-amino-acid chain; its full sequence is Methionine import ATP-binding protein MetN 1 (343 aa).

The ABC transporter domain occupies 2-241 (IKLSNITKVF…PKTPLAQKFI (240 aa)). Position 38–45 (38–45 (GASGAGKS)) interacts with ATP.

It belongs to the ABC transporter superfamily. Methionine importer (TC 3.A.1.24) family. As to quaternary structure, the complex is composed of two ATP-binding proteins (MetN), two transmembrane proteins (MetI) and a solute-binding protein (MetQ).

The protein resides in the cell inner membrane. The catalysed reaction is L-methionine(out) + ATP + H2O = L-methionine(in) + ADP + phosphate + H(+). It catalyses the reaction D-methionine(out) + ATP + H2O = D-methionine(in) + ADP + phosphate + H(+). Functionally, part of the ABC transporter complex MetNIQ involved in methionine import. Responsible for energy coupling to the transport system. This is Methionine import ATP-binding protein MetN 1 from Salmonella typhi.